Here is a 280-residue protein sequence, read N- to C-terminus: Large ribosomal subunit protein uL2 (280 aa).

Disordered stretches follow at residues 27–59 (STPE…GGHK) and 225–280 (VMNP…KHSR). Composition is skewed to basic residues over residues 37–59 (LHGR…GGHK) and 268–280 (IVRR…KHSR).

This sequence belongs to the universal ribosomal protein uL2 family. Part of the 50S ribosomal subunit. Forms a bridge to the 30S subunit in the 70S ribosome.

Functionally, one of the primary rRNA binding proteins. Required for association of the 30S and 50S subunits to form the 70S ribosome, for tRNA binding and peptide bond formation. It has been suggested to have peptidyltransferase activity; this is somewhat controversial. Makes several contacts with the 16S rRNA in the 70S ribosome. This chain is Large ribosomal subunit protein uL2, found in Mycobacterium bovis (strain ATCC BAA-935 / AF2122/97).